Here is a 368-residue protein sequence, read N- to C-terminus: Zinc finger protein 24 (368 aa).

A Glycyl lysine isopeptide (Lys-Gly) (interchain with G-Cter in SUMO2) cross-link involves residue Lys22. A Glycyl lysine isopeptide (Lys-Gly) (interchain with G-Cter in SUMO1); alternate cross-link involves residue Lys27. Lys27 is covalently cross-linked (Glycyl lysine isopeptide (Lys-Gly) (interchain with G-Cter in SUMO2); alternate). The 83-residue stretch at 52-134 (RQRFRQFGYQ…TVLEDLESEL (83 aa)) folds into the SCAN box domain. A phosphoserine mark is found at Ser132 and Ser142. Residues Lys147, Lys177, and Lys236 each participate in a glycyl lysine isopeptide (Lys-Gly) (interchain with G-Cter in SUMO2) cross-link. Residues 251–273 (HICDECGKHFSQGSALILHQRIH) form a C2H2-type 1 zinc finger. The interval 251-301 (HICDECGKHFSQGSALILHQRIHSGEKPYGCVECGKAFSRSSILVQHQRVH) is necessary and sufficient for nuclear localization. Ser274 carries the phosphoserine modification. Glycyl lysine isopeptide (Lys-Gly) (interchain with G-Cter in SUMO2) cross-links involve residues Lys277 and Lys286. 3 consecutive C2H2-type zinc fingers follow at residues 279-301 (YGCVECGKAFSRSSILVQHQRVH), 307-329 (YKCLECGKAFSQNSGLINHQRIH), and 335-357 (YECVQCGKSYSQSSNLFRHQRRH). Ser292 bears the Phosphoserine mark. Tyr335 is subject to Phosphotyrosine. Residues Lys361 and Lys367 each participate in a glycyl lysine isopeptide (Lys-Gly) (interchain with G-Cter in SUMO2) cross-link.

Belongs to the krueppel C2H2-type zinc-finger protein family. Sumoylated.

The protein localises to the nucleus. Functionally, transcription factor required for myelination of differentiated oligodendrocytes. Required for the conversion of oligodendrocytes from the premyelinating to the myelinating state. In the developing central nervous system (CNS), involved in the maintenance in the progenitor stage by promoting the cell cycle. Specifically binds to the 5'-TCAT-3' DNA sequence. Has transcription repressor activity in vitro. The protein is Zinc finger protein 24 (ZNF24) of Pongo abelii (Sumatran orangutan).